The following is a 339-amino-acid chain: Methylthioribose-1-phosphate isomerase (339 aa).

Substrate contacts are provided by residues 50 to 52 (RGA), Arg84, and Gln186. The Proton donor role is filled by Asp227. 237–238 (NK) lines the substrate pocket.

It belongs to the eIF-2B alpha/beta/delta subunits family. MtnA subfamily.

It catalyses the reaction 5-(methylsulfanyl)-alpha-D-ribose 1-phosphate = 5-(methylsulfanyl)-D-ribulose 1-phosphate. It functions in the pathway amino-acid biosynthesis; L-methionine biosynthesis via salvage pathway; L-methionine from S-methyl-5-thio-alpha-D-ribose 1-phosphate: step 1/6. Catalyzes the interconversion of methylthioribose-1-phosphate (MTR-1-P) into methylthioribulose-1-phosphate (MTRu-1-P). The protein is Methylthioribose-1-phosphate isomerase of Sulfurihydrogenibium sp. (strain YO3AOP1).